Reading from the N-terminus, the 271-residue chain is Virulence regulon transcriptional activator VirF (271 aa).

The HTH araC/xylS-type domain occupies 167–265; the sequence is ERLQKFMEEN…GCTPSQARLT (99 aa). 2 consecutive DNA-binding regions (H-T-H motif) follow at residues 184–205 and 232–255; these read SKFAREFGMGLTTFKELFGTVY and IVDIAMEAGFSSQSYFTQSYRRRF.

Transcriptional activator of the Yersinia virulence regulon. This Yersinia enterocolitica protein is Virulence regulon transcriptional activator VirF (virF).